Here is a 389-residue protein sequence, read N- to C-terminus: Acetyl-CoA:oxalate CoA-transferase (389 aa).

The active site involves H237.

In terms of assembly, homodimer.

The catalysed reaction is oxalate + acetyl-CoA = oxalyl-CoA + acetate. Functionally, involved in the catabolism of oxalate and in the adapatation to low pH. ACOCT serves to prime the oxalate-induced acid tolerance response (ATR) cycle by producing substrate for oxalyl-CoA decarboxylase (OXC) and formyl-coenzyme A transferase (FCOCT). Catalyzes the reversible conversion of acetyl-CoA and oxalate to oxalyl-CoA and acetate. It can also use formyl-CoA and oxalate to produce oxalyl-CoA and formate with significantly reduced specific activity. This chain is Acetyl-CoA:oxalate CoA-transferase (uctC), found in Acetobacter aceti.